The chain runs to 143 residues: Hemoglobin subunit alpha (143 aa).

An N-acetylserine modification is found at Ser-2. A Globin domain is found at 2–143 (SLSDKDKSAV…VALALAEKYR (142 aa)). Position 60 (His-60) interacts with O2. A heme b-binding site is contributed by His-89.

This sequence belongs to the globin family. In terms of assembly, heterotetramer of two alpha chains and two beta chains. In terms of tissue distribution, red blood cells.

Its function is as follows. Involved in oxygen transport from gills to the various peripheral tissues. The protein is Hemoglobin subunit alpha (hba) of Pogonophryne scotti (Saddleback plunderfish).